The following is a 437-amino-acid chain: uncharacterized protein (437 aa).

3 stretches are compositionally biased toward basic residues: residues 1–29 (MDTP…RHRN), 81–91 (LRGRHPRVRRV), and 101–118 (RRRH…GRNR). Disordered stretches follow at residues 1 to 31 (MDTP…RNDH) and 77 to 437 (EHVP…QGTR). The segment covering 119-132 (HAGDRRAPGVDSRL) has biased composition (basic and acidic residues). Over residues 133 to 142 (RQQHQHPRGR) the composition is skewed to basic residues. The segment covering 143–164 (HASDRVQDGAHPRRQRLREQPR) has biased composition (basic and acidic residues). Residues 165–190 (HAGRPRRRQPPRRGRSRGTHRRHLRQ) show a composition bias toward basic residues. Basic and acidic residues-rich tracts occupy residues 198 to 209 (GPDEDQAREFRG) and 217 to 253 (HPPT…EAGR). 2 stretches are compositionally biased toward basic residues: residues 284–293 (TVHRGGRLRG) and 324–348 (PHSR…RVRH). Positions 371–382 (DAAAYASVPAHA) are enriched in low complexity.

This is an uncharacterized protein from Haloferax lucentense (strain DSM 14919 / JCM 9276 / NCIMB 13854 / Aa 2.2) (Haloferax alicantei).